A 417-amino-acid polypeptide reads, in one-letter code: Phosphoglycerate kinase (417 aa).

(2R)-3-phosphoglycerate is bound by residues Val-23, Asp-24, Phe-25, Asn-26, Gln-38, Arg-39, Ser-62, His-63, Gly-65, Arg-66, Leu-121, Arg-122, His-169, and Arg-170. Gly-213 is an ADP binding site. Position 213 (Gly-213) interacts with CDP. 2 residues coordinate AMP: Ala-214 and Lys-215. Ala-214 contributes to the ATP binding site. Ala-214 is a Mg(2+) binding site. Asp-218 lines the CDP pocket. Asp-218 provides a ligand contact to Mg(2+). Lys-219 is an AMP binding site. Lys-219 serves as a coordination point for ATP. Residue Gly-237 participates in ADP binding. Gly-237 lines the CDP pocket. Residues Gly-238 and Gly-312 each coordinate AMP. 2 residues coordinate ATP: Gly-238 and Gly-312. Residues Gly-337 and Phe-342 each contribute to the CDP site. Residue Phe-342 participates in ADP binding. Glu-343 contributes to the AMP binding site. Residues Glu-343, Asp-374, and Thr-375 each coordinate ATP. Asp-374 lines the Mg(2+) pocket.

This sequence belongs to the phosphoglycerate kinase family. In terms of assembly, monomer. It depends on Mg(2+) as a cofactor.

Its subcellular location is the cytoplasm. The protein resides in the mitochondrion. It carries out the reaction (2R)-3-phosphoglycerate + ATP = (2R)-3-phospho-glyceroyl phosphate + ADP. It participates in carbohydrate degradation; glycolysis; pyruvate from D-glyceraldehyde 3-phosphate: step 2/5. In terms of biological role, catalyzes one of the two ATP producing reactions in the glycolytic pathway via the reversible conversion of 1,3-diphosphoglycerate to 3-phosphoglycerate. Both L- and D- forms of purine and pyrimidine nucleotides can be used as substrates, but the activity is much lower on pyrimidines. Negatively regulates the biosynthesis of acetyl-CoA from pyruvate in the mitochondrion. This chain is Phosphoglycerate kinase (PGK1), found in Candida maltosa (Yeast).